The chain runs to 147 residues: Large ribosomal subunit protein uL22c (147 aa).

It belongs to the universal ribosomal protein uL22 family. As to quaternary structure, part of the 50S ribosomal subunit.

It is found in the plastid. The protein resides in the chloroplast. Functionally, this protein binds specifically to 23S rRNA. The globular domain of the protein is located near the polypeptide exit tunnel on the outside of the subunit, while an extended beta-hairpin is found that lines the wall of the exit tunnel in the center of the 70S ribosome. The protein is Large ribosomal subunit protein uL22c (rpl22) of Lolium perenne (Perennial ryegrass).